The following is a 49-amino-acid chain: Large ribosomal subunit protein bL33 (49 aa).

The protein belongs to the bacterial ribosomal protein bL33 family.

This is Large ribosomal subunit protein bL33 from Leuconostoc citreum (strain KM20).